A 350-amino-acid polypeptide reads, in one-letter code: Purine-binding protein BAB2_0673 (350 aa).

Residues 1–17 form the signal peptide; that stretch reads MVIATVAGFMLGGAAHA. Adenine contacts are provided by Trp-36, Trp-185, and Asp-211.

It belongs to the BMP lipoprotein family.

In terms of biological role, binds adenine and probably also other purines, such as guanine. May play a role in adenine and guanine uptake. May be part of an ABC-type uptake system for adenine and similar ligands. In Brucella abortus (strain 2308), this protein is Purine-binding protein BAB2_0673.